Consider the following 306-residue polypeptide: UDP-N-acetylenolpyruvoylglucosamine reductase (306 aa).

Residues 29–193 (RVGGPADWLF…IRASLRGTPD (165 aa)) form the FAD-binding PCMH-type domain. The active site involves Arg-173. Residue Ser-222 is the Proton donor of the active site. Glu-292 is an active-site residue.

It belongs to the MurB family. FAD is required as a cofactor.

It is found in the cytoplasm. It catalyses the reaction UDP-N-acetyl-alpha-D-muramate + NADP(+) = UDP-N-acetyl-3-O-(1-carboxyvinyl)-alpha-D-glucosamine + NADPH + H(+). It participates in cell wall biogenesis; peptidoglycan biosynthesis. Functionally, cell wall formation. The protein is UDP-N-acetylenolpyruvoylglucosamine reductase of Gluconobacter oxydans (strain 621H) (Gluconobacter suboxydans).